Here is a 507-residue protein sequence, read N- to C-terminus: ATP synthase subunit alpha, chloroplastic (507 aa).

Residue 170 to 177 (GDRQTGKT) coordinates ATP.

The protein belongs to the ATPase alpha/beta chains family. As to quaternary structure, F-type ATPases have 2 components, CF(1) - the catalytic core - and CF(0) - the membrane proton channel. CF(1) has five subunits: alpha(3), beta(3), gamma(1), delta(1), epsilon(1). CF(0) has four main subunits: a, b, b' and c.

It localises to the plastid. It is found in the chloroplast thylakoid membrane. It carries out the reaction ATP + H2O + 4 H(+)(in) = ADP + phosphate + 5 H(+)(out). In terms of biological role, produces ATP from ADP in the presence of a proton gradient across the membrane. The alpha chain is a regulatory subunit. The protein is ATP synthase subunit alpha, chloroplastic of Daucus carota (Wild carrot).